A 217-amino-acid chain; its full sequence is tRNA (guanine-N(7)-)-methyltransferase (217 aa).

S-adenosyl-L-methionine is bound by residues glutamate 43, aspartate 68, asparagine 101, and asparagine 123. Lysine 127 contacts substrate. Positions 129 to 134 (RHNKRR) are interaction with RNA. Substrate-binding positions include aspartate 159 and 196 to 199 (TEYE).

The protein belongs to the class I-like SAM-binding methyltransferase superfamily. TrmB family.

It carries out the reaction guanosine(46) in tRNA + S-adenosyl-L-methionine = N(7)-methylguanosine(46) in tRNA + S-adenosyl-L-homocysteine. Its pathway is tRNA modification; N(7)-methylguanine-tRNA biosynthesis. Its function is as follows. Catalyzes the formation of N(7)-methylguanine at position 46 (m7G46) in tRNA. This is tRNA (guanine-N(7)-)-methyltransferase from Clostridium botulinum (strain Loch Maree / Type A3).